The following is a 561-amino-acid chain: Transcription factor Clamp (561 aa).

The C2H2-type 1 zinc finger occupies 127–149; the sequence is FKCDVCSDMFPHLALLNAHKRMH. Residues Cys129, Cys132, His145, and His149 each contribute to the Zn(2+) site. Positions 290–315 are disordered; the sequence is TGGTTPKREASSGSGHHPVKKRNSQQ. 6 consecutive C2H2-type zinc fingers follow at residues 360 to 382, 388 to 410, 416 to 438, 444 to 466, 472 to 494, and 500 to 522; these read FSCN…KKLH, YKCS…ARIH, YKCQ…ERTH, YVCG…RRIH, YKCE…AKVH, and YKCE…RGIH.

Homodimer. Interacts with msl-2; promoting recruitment of the male-specific lethal (MSL) histone acetyltransferase complex to chromatin. Interacts with Nelf-A. Interacts with NELF-B.

It is found in the nucleus. The protein resides in the chromosome. Functionally, transcription factor involved in X-chromosome dosage compensation in males, the process by which transcription of the single X chromosome in the male is elevated. Binds to the DNA sequence (GA)n. Clamp-binding promotes nucleosome depletion and chromatin accessibility, thereby allowing access to other transcription factors. Specifically binds to cis-acting elements on the X-chromosome named chromatin entry sites and promotes recruitment of the male-specific lethal (MSL) histone acetyltransferase complex, which associates with actively transcribed genes on the male X-chromosome to upregulate their expression. Mechanistically, acts by promoting chromatin accessibility at chromatin entry sites, facilitating DNA-binding of msl-2, followed by MSL complex recruitment. In addition to dosage compensation, also involved in zygotic genome activation (ZGA), a critical event in early embryonic development during which the developmental control passes from maternally provided mRNAs to the expression of the zygotic genome after fertilization. Maternally-provided protein cooperates with Zelda (zld) to activate zygotic transcription by increasing chromatin accessibility at promoters of specific genes and facilitate zld occupancy at a subset of key embryonic promoters. Also acts as an activator of gypsy chromatin insulator function by promoting binding of Cp190 to chromatin. This chain is Transcription factor Clamp, found in Drosophila melanogaster (Fruit fly).